The chain runs to 128 residues: Ribonuclease pancreatic (128 aa).

The segment covering 1–13 (GESRAEKFQRQHM) has biased composition (basic and acidic residues). The tract at residues 1-24 (GESRAEKFQRQHMDSGSSPSSSST) is disordered. Positions 7 and 10 each coordinate substrate. Histidine 12 functions as the Proton acceptor in the catalytic mechanism. Intrachain disulfides connect cysteine 26–cysteine 84, cysteine 40–cysteine 95, cysteine 58–cysteine 110, and cysteine 65–cysteine 72. N-linked (GlcNAc...) asparagine glycosylation is present at asparagine 34. Substrate-binding positions include 41-45 (KSVNT), lysine 66, and arginine 85. Histidine 119 serves as the catalytic Proton donor.

The protein belongs to the pancreatic ribonuclease family. In terms of assembly, monomer. Interacts with and forms tight 1:1 complexes with RNH1. Dimerization of two such complexes may occur. Interaction with RNH1 inhibits this protein. Pancreas and other tissues and body fluids (indicating it may have other physiological functions besides its role in digestion).

It is found in the secreted. The catalysed reaction is an [RNA] containing cytidine + H2O = an [RNA]-3'-cytidine-3'-phosphate + a 5'-hydroxy-ribonucleotide-3'-[RNA].. It carries out the reaction an [RNA] containing uridine + H2O = an [RNA]-3'-uridine-3'-phosphate + a 5'-hydroxy-ribonucleotide-3'-[RNA].. Functionally, endonuclease that catalyzes the cleavage of RNA on the 3' side of pyrimidine nucleotides. Acts on single-stranded and double-stranded RNA. This chain is Ribonuclease pancreatic (RNASE1), found in Semnopithecus entellus (Northern plains gray langur).